Here is a 190-residue protein sequence, read N- to C-terminus: NADH dehydrogenase [ubiquinone] iron-sulfur protein 3 (190 aa).

It belongs to the complex I 30 kDa subunit family. As to quaternary structure, complex I is composed of about 45 different subunits. This is a component of the iron-sulfur (IP) fragment of the enzyme.

Its subcellular location is the mitochondrion inner membrane. It carries out the reaction a ubiquinone + NADH + 5 H(+)(in) = a ubiquinol + NAD(+) + 4 H(+)(out). Functionally, core subunit of the mitochondrial membrane respiratory chain NADH dehydrogenase (Complex I) that is believed to belong to the minimal assembly required for catalysis. Complex I functions in the transfer of electrons from NADH to the respiratory chain. The immediate electron acceptor for the enzyme is believed to be ubiquinone. This is NADH dehydrogenase [ubiquinone] iron-sulfur protein 3 (NAD9) from Oryza sativa subsp. japonica (Rice).